Consider the following 156-residue polypeptide: Small ribosomal subunit protein uS7 (156 aa).

It belongs to the universal ribosomal protein uS7 family. Part of the 30S ribosomal subunit. Contacts proteins S9 and S11.

One of the primary rRNA binding proteins, it binds directly to 16S rRNA where it nucleates assembly of the head domain of the 30S subunit. Is located at the subunit interface close to the decoding center, probably blocks exit of the E-site tRNA. This Streptococcus sanguinis (strain SK36) protein is Small ribosomal subunit protein uS7.